Consider the following 432-residue polypeptide: Keratin, type I cytoskeletal 17 (432 aa).

Residues 1–24 are disordered; the sequence is MTTSIRQFTSSSSIKGSSGLGGGS. Positions 1 to 83 are head; the sequence is MTTSIRQFTS…GGVDGLLAGG (83 aa). Phosphoserine occurs at positions 12 and 13. Lysine 15 participates in a covalent cross-link: Glycyl lysine isopeptide (Lys-Gly) (interchain with G-Cter in SUMO1); alternate. Lysine 15 participates in a covalent cross-link: Glycyl lysine isopeptide (Lys-Gly) (interchain with G-Cter in SUMO2); alternate. Serine 25, serine 32, and serine 39 each carry phosphoserine. Serine 44 bears the Phosphoserine; by RPS6KA1 mark. The interval 84-120 is coil 1A; sequence EKATMQNLNDRLASYLDKVRALEEANTELEVKIRDWY. The IF rod domain maps to 84 to 395; that stretch reads EKATMQNLND…RLLEGEDAHL (312 aa). A peptide epitope S1; induces T-cell and keratinocyte proliferation and IFN-gamma production region spans residues 102 to 116; sequence VRALEEANTELEVKI. Phosphothreonine is present on threonine 110. A linker 1 region spans residues 121 to 138; sequence QRQAPGPARDYSQYYRTI. Residues 139–230 form a coil 1B region; it reads EELQNKILTA…NHEEEMNALR (92 aa). The tract at residues 153-167 is peptide epitope S2; induces T-cell proliferation and IFN-gamma production; the sequence is ANILLQIDNARLAAD. The tract at residues 231–250 is linker 12; it reads GQVGGEINVEMDAAPGVDLS. Residues 251–392 form a coil 2 region; it reads RILNEMRDQY…TYRRLLEGED (142 aa). A Glycyl lysine isopeptide (Lys-Gly) (interchain with G-Cter in SUMO2) cross-link involves residue lysine 278. Threonine 279 carries the phosphothreonine modification. The residue at position 323 (serine 323) is a Phosphoserine. A peptide epitope S4; induces T-cell and keratinocyte proliferation and IFN-gamma production region spans residues 332-346; it reads ENRYCVQLSQIQGLI. A tail region spans residues 393-432; sequence AHLTQYKKEPVTTRQVRTIVEEVQDGKVISSREQVHQTTR. Glycyl lysine isopeptide (Lys-Gly) (interchain with G-Cter in SUMO1); alternate cross-links involve residues lysine 399, lysine 400, and lysine 419. Glycyl lysine isopeptide (Lys-Gly) (interchain with G-Cter in SUMO2); alternate cross-links involve residues lysine 399, lysine 400, and lysine 419.

Belongs to the intermediate filament family. As to quaternary structure, heterodimer of a type I and a type II keratin. KRT17 associates with KRT6 isomers (KRT6A or KRT6B). Interacts with TRADD and SFN. Phosphorylation at Ser-44 occurs in a growth- and stress-dependent fashion in skin keratinocytes, it has no effect on filament organization. Expressed in the outer root sheath and medulla region of hair follicle specifically from eyebrow and beard, digital pulp, nail matrix and nail bed epithelium, mucosal stratified squamous epithelia and in basal cells of oral epithelium, palmoplantar epidermis and sweat and mammary glands. Also expressed in myoepithelium of prostate, basal layer of urinary bladder, cambial cells of sebaceous gland and in exocervix (at protein level).

It is found in the cytoplasm. In terms of biological role, type I keratin involved in the formation and maintenance of various skin appendages, specifically in determining shape and orientation of hair. Required for the correct growth of hair follicles, in particular for the persistence of the anagen (growth) state. Modulates the function of TNF-alpha in the specific context of hair cycling. Regulates protein synthesis and epithelial cell growth through binding to the adapter protein SFN and by stimulating Akt/mTOR pathway. Involved in tissue repair. May be a marker of basal cell differentiation in complex epithelia and therefore indicative of a certain type of epithelial 'stem cells'. Acts as a promoter of epithelial proliferation by acting a regulator of immune response in skin: promotes Th1/Th17-dominated immune environment contributing to the development of basaloid skin tumors. May act as an autoantigen in the immunopathogenesis of psoriasis, with certain peptide regions being a major target for autoreactive T-cells and hence causing their proliferation. In Homo sapiens (Human), this protein is Keratin, type I cytoskeletal 17 (KRT17).